The following is a 168-amino-acid chain: Translationally-controlled tumor protein homolog (168 aa).

The TCTP domain occupies 1-168 (MLLYKDVISG…FKDGLVSEKF (168 aa)). Serine 78 carries the phosphoserine modification.

This sequence belongs to the TCTP family.

The protein localises to the cytoplasm. Involved in calcium binding and microtubule stabilization. May be a guanine nucleotide-free chaperone (GFC). The sequence is that of Translationally-controlled tumor protein homolog (p23fy) from Schizosaccharomyces pombe (strain 972 / ATCC 24843) (Fission yeast).